A 76-amino-acid chain; its full sequence is MTQKRPYEHRKAQKQVKNLESYQCMVCWEVNSKANGHHLIPYSEGGSADIQNMMTLCPSCHTKYHKGELKIDIHRF.

Residues 24–66 enclose the HNH domain; the sequence is CMVCWEVNSKANGHHLIPYSEGGSADIQNMMTLCPSCHTKYHK.

Belongs to the HNH nuclease family.

Its function is as follows. Putative P-450 reductase. The polypeptide is Anaredoxin (Nostoc sp. (strain PCC 7120 / SAG 25.82 / UTEX 2576)).